The chain runs to 813 residues: Serine/threonine-protein kinase kin-29 (813 aa).

The Protein kinase domain occupies 18–269 (YDVGRAIGKG…IQNVLAHRWM (252 aa)). ATP-binding positions include 24 to 32 (IGKGNFATV) and lysine 47. Residue aspartate 140 is the Proton acceptor of the active site. A disordered region spans residues 383 to 412 (LSSPDCDSDDSSNSDLCDESPLSSLEPNHK). The span at 388-400 (CDSDDSSNSDLCD) shows a compositional bias: acidic residues.

It belongs to the protein kinase superfamily. CAMK Ser/Thr protein kinase family. SNF1 subfamily. In terms of assembly, interacts with tax-6. Requires Mg(2+) as cofactor. In terms of processing, autophosphorylated. Elevated cAMP levels appears to act via PKA to directly or indirectly phosphorylate multiple sites on kin-29 and inhibit function.

The protein resides in the cytoplasm. It is found in the nucleus. It catalyses the reaction L-seryl-[protein] + ATP = O-phospho-L-seryl-[protein] + ADP + H(+). The catalysed reaction is L-threonyl-[protein] + ATP = O-phospho-L-threonyl-[protein] + ADP + H(+). Regulates chemoreceptor expression by phosphorylating the hda-4 class II histone deacetylase (HDAC) and inhibiting the gene repression functions of hda-4 and the mef-2 transcription factor, enabling the correct sensing and transduction of food signals. Role in determining body size, the dauer decision and serotonin-mediated egg laying. May modulate the Sma/Mab pathway and regulates development in the later larval stages. The chain is Serine/threonine-protein kinase kin-29 from Caenorhabditis briggsae.